Reading from the N-terminus, the 254-residue chain is 5'-nucleotidase SurE (254 aa).

4 residues coordinate a divalent metal cation: aspartate 8, aspartate 9, serine 38, and asparagine 91.

This sequence belongs to the SurE nucleotidase family. It depends on a divalent metal cation as a cofactor.

It is found in the cytoplasm. The enzyme catalyses a ribonucleoside 5'-phosphate + H2O = a ribonucleoside + phosphate. Its function is as follows. Nucleotidase that shows phosphatase activity on nucleoside 5'-monophosphates. This is 5'-nucleotidase SurE from Anaeromyxobacter dehalogenans (strain 2CP-1 / ATCC BAA-258).